Reading from the N-terminus, the 234-residue chain is Ribose-5-phosphate isomerase A (234 aa).

Substrate contacts are provided by residues 39 to 42 (TGST), 92 to 95 (DGAD), and 105 to 108 (KGGG). The active-site Proton acceptor is Glu-114. Position 132 (Lys-132) interacts with substrate.

It belongs to the ribose 5-phosphate isomerase family. In terms of assembly, homodimer.

It catalyses the reaction aldehydo-D-ribose 5-phosphate = D-ribulose 5-phosphate. The protein operates within carbohydrate degradation; pentose phosphate pathway; D-ribose 5-phosphate from D-ribulose 5-phosphate (non-oxidative stage): step 1/1. Catalyzes the reversible conversion of ribose-5-phosphate to ribulose 5-phosphate. The sequence is that of Ribose-5-phosphate isomerase A from Albidiferax ferrireducens (strain ATCC BAA-621 / DSM 15236 / T118) (Rhodoferax ferrireducens).